The following is a 334-amino-acid chain: HTH-type transcriptional repressor PurR (334 aa).

The HTH lacI-type domain occupies alanine 2–cysteine 56. The segment at residues isoleucine 4–asparagine 23 is a DNA-binding region (H-T-H motif). The DNA-binding element occupies serine 48–cysteine 56. Residues phenylalanine 73, lysine 189, threonine 191, phenylalanine 220, and aspartate 274 each coordinate hypoxanthine.

Homodimer.

The protein operates within purine metabolism; purine nucleotide biosynthesis [regulation]. Its function is as follows. Is the main repressor of the genes involved in the de novo synthesis of purine nucleotides, regulating purB, purC, purEK, purF, purHD, purL, purMN and guaBA expression. PurR is allosterically activated to bind its cognate DNA by binding the purine corepressors, hypoxanthine or guanine, thereby effecting transcription repression. The chain is HTH-type transcriptional repressor PurR from Photobacterium profundum (strain SS9).